We begin with the raw amino-acid sequence, 198 residues long: Cytochrome c oxidase subunit 2 (198 aa).

A helical transmembrane segment spans residues 1–13; it reads AICSLVLYLLTLM. At 14–26 the chain is on the mitochondrial matrix side; that stretch reads LMEKLSSNTVDAQ. A helical transmembrane segment spans residues 27-54; sequence EVELIWTILPAIVLILLALPSLQILYMM. Residues 55–198 are Mitochondrial intermembrane-facing; it reads DEIDEPDLTL…WSSLLSTSSL (144 aa). Cu cation is bound by residues His-128, Cys-163, Glu-165, Cys-167, His-171, and Met-174. Glu-165 provides a ligand contact to Mg(2+).

The protein belongs to the cytochrome c oxidase subunit 2 family. Component of the cytochrome c oxidase (complex IV, CIV), a multisubunit enzyme composed of 14 subunits. The complex is composed of a catalytic core of 3 subunits MT-CO1, MT-CO2 and MT-CO3, encoded in the mitochondrial DNA, and 11 supernumerary subunits COX4I, COX5A, COX5B, COX6A, COX6B, COX6C, COX7A, COX7B, COX7C, COX8 and NDUFA4, which are encoded in the nuclear genome. The complex exists as a monomer or a dimer and forms supercomplexes (SCs) in the inner mitochondrial membrane with NADH-ubiquinone oxidoreductase (complex I, CI) and ubiquinol-cytochrome c oxidoreductase (cytochrome b-c1 complex, complex III, CIII), resulting in different assemblies (supercomplex SCI(1)III(2)IV(1) and megacomplex MCI(2)III(2)IV(2)). Found in a complex with TMEM177, COA6, COX18, COX20, SCO1 and SCO2. Interacts with TMEM177 in a COX20-dependent manner. Interacts with COX20. Interacts with COX16. Cu cation is required as a cofactor.

The protein resides in the mitochondrion inner membrane. It carries out the reaction 4 Fe(II)-[cytochrome c] + O2 + 8 H(+)(in) = 4 Fe(III)-[cytochrome c] + 2 H2O + 4 H(+)(out). Component of the cytochrome c oxidase, the last enzyme in the mitochondrial electron transport chain which drives oxidative phosphorylation. The respiratory chain contains 3 multisubunit complexes succinate dehydrogenase (complex II, CII), ubiquinol-cytochrome c oxidoreductase (cytochrome b-c1 complex, complex III, CIII) and cytochrome c oxidase (complex IV, CIV), that cooperate to transfer electrons derived from NADH and succinate to molecular oxygen, creating an electrochemical gradient over the inner membrane that drives transmembrane transport and the ATP synthase. Cytochrome c oxidase is the component of the respiratory chain that catalyzes the reduction of oxygen to water. Electrons originating from reduced cytochrome c in the intermembrane space (IMS) are transferred via the dinuclear copper A center (CU(A)) of subunit 2 and heme A of subunit 1 to the active site in subunit 1, a binuclear center (BNC) formed by heme A3 and copper B (CU(B)). The BNC reduces molecular oxygen to 2 water molecules using 4 electrons from cytochrome c in the IMS and 4 protons from the mitochondrial matrix. This Tinamus major (Great tinamou) protein is Cytochrome c oxidase subunit 2 (MT-CO2).